The following is a 240-amino-acid chain: UDP-2,3-diacylglucosamine hydrolase (240 aa).

Positions 8, 10, 41, 79, and 114 each coordinate Mn(2+). 79–80 (NR) lines the substrate pocket. The substrate site is built by Asp122, Ser160, Asn164, Lys167, and His195. Mn(2+)-binding residues include His195 and His197.

This sequence belongs to the LpxH family. The cofactor is Mn(2+).

The protein resides in the cell inner membrane. The catalysed reaction is UDP-2-N,3-O-bis[(3R)-3-hydroxytetradecanoyl]-alpha-D-glucosamine + H2O = 2-N,3-O-bis[(3R)-3-hydroxytetradecanoyl]-alpha-D-glucosaminyl 1-phosphate + UMP + 2 H(+). It functions in the pathway glycolipid biosynthesis; lipid IV(A) biosynthesis; lipid IV(A) from (3R)-3-hydroxytetradecanoyl-[acyl-carrier-protein] and UDP-N-acetyl-alpha-D-glucosamine: step 4/6. Hydrolyzes the pyrophosphate bond of UDP-2,3-diacylglucosamine to yield 2,3-diacylglucosamine 1-phosphate (lipid X) and UMP by catalyzing the attack of water at the alpha-P atom. Involved in the biosynthesis of lipid A, a phosphorylated glycolipid that anchors the lipopolysaccharide to the outer membrane of the cell. This Pectobacterium carotovorum subsp. carotovorum (strain PC1) protein is UDP-2,3-diacylglucosamine hydrolase.